The primary structure comprises 1267 residues: RNA-directed RNA polymerase lambda-3 (1267 aa).

The RdRp catalytic domain occupies 555–792; sequence LSPTSGSAVI…KLYFIFGCRI (238 aa).

Belongs to the reoviridae RNA-directed RNA polymerase family.

The protein localises to the virion. The catalysed reaction is RNA(n) + a ribonucleoside 5'-triphosphate = RNA(n+1) + diphosphate. In terms of biological role, RNA-directed RNA polymerase that is involved in transcription and genome replication. Following infection, it catalyzes the synthesis of fully conservative plus strands. After core assembly, which consists in recruitment of one capped plus-strand for each genomic segments and polymerase complexes, the polymerase switches mode and catalyzes the synthesis of complementary minus-strands. The sequence is that of RNA-directed RNA polymerase lambda-3 (L1) from Reovirus type 3 (strain Dearing) (T3D).